The sequence spans 624 residues: (-)-beta-phellandrene synthase 2, chloroplastic (624 aa).

The transit peptide at 1 to 47 (MALVSVAPLVSMRRSLFSSPYELKSIDKTIPNLVMCRKRMLGRPSIR) directs the protein to the chloroplast. Residues Asp375, Asp379, and Asp527 each coordinate Mg(2+). The DDXXD motif signature appears at 375-379 (DDIYD).

This sequence belongs to the terpene synthase family. Tpsd subfamily. The cofactor is Mg(2+). It depends on Mn(2+) as a cofactor.

The protein resides in the plastid. The protein localises to the chloroplast. The catalysed reaction is (2E)-geranyl diphosphate = (-)-beta-phellandrene + diphosphate. The protein operates within terpene metabolism; oleoresin biosynthesis. It functions in the pathway secondary metabolite biosynthesis; terpenoid biosynthesis. Its function is as follows. Monoterpene synthase (TPS) involved in the biosynthesis of monoterpene natural products included in conifer oleoresin secretions and volatile emissions; these compounds contribute to biotic and abiotic stress defense against herbivores and pathogens. Catalyzes the conversion of (2E)-geranyl diphosphate (GPP) to (-)-beta-phellandrene. This chain is (-)-beta-phellandrene synthase 2, chloroplastic, found in Pinus contorta (Shore pine).